Consider the following 196-residue polypeptide: uncharacterized protein (196 aa).

To H.influenzae HI_0431.

This is an uncharacterized protein from Salmonella typhi.